Here is a 142-residue protein sequence, read N- to C-terminus: Large ribosomal subunit protein uL11 (142 aa).

It belongs to the universal ribosomal protein uL11 family. As to quaternary structure, part of the ribosomal stalk of the 50S ribosomal subunit. Interacts with L10 and the large rRNA to form the base of the stalk. L10 forms an elongated spine to which L12 dimers bind in a sequential fashion forming a multimeric L10(L12)X complex. In terms of processing, one or more lysine residues are methylated.

Its function is as follows. Forms part of the ribosomal stalk which helps the ribosome interact with GTP-bound translation factors. In Hamiltonella defensa subsp. Acyrthosiphon pisum (strain 5AT), this protein is Large ribosomal subunit protein uL11.